Here is a 121-residue protein sequence, read N- to C-terminus: Large ribosomal subunit protein bL12 (121 aa).

It belongs to the bacterial ribosomal protein bL12 family. Homodimer. Part of the ribosomal stalk of the 50S ribosomal subunit. Forms a multimeric L10(L12)X complex, where L10 forms an elongated spine to which 2 to 4 L12 dimers bind in a sequential fashion. Binds GTP-bound translation factors.

In terms of biological role, forms part of the ribosomal stalk which helps the ribosome interact with GTP-bound translation factors. Is thus essential for accurate translation. This Pelagibacter ubique (strain HTCC1062) protein is Large ribosomal subunit protein bL12.